A 272-amino-acid polypeptide reads, in one-letter code: Ribosomal RNA small subunit methyltransferase A (272 aa).

S-adenosyl-L-methionine is bound by residues Asn-18, Leu-20, Gly-45, Glu-66, Asp-91, and Asn-113.

It belongs to the class I-like SAM-binding methyltransferase superfamily. rRNA adenine N(6)-methyltransferase family. RsmA subfamily.

Its subcellular location is the cytoplasm. The catalysed reaction is adenosine(1518)/adenosine(1519) in 16S rRNA + 4 S-adenosyl-L-methionine = N(6)-dimethyladenosine(1518)/N(6)-dimethyladenosine(1519) in 16S rRNA + 4 S-adenosyl-L-homocysteine + 4 H(+). Specifically dimethylates two adjacent adenosines (A1518 and A1519) in the loop of a conserved hairpin near the 3'-end of 16S rRNA in the 30S particle. May play a critical role in biogenesis of 30S subunits. The polypeptide is Ribosomal RNA small subunit methyltransferase A (Pectobacterium atrosepticum (strain SCRI 1043 / ATCC BAA-672) (Erwinia carotovora subsp. atroseptica)).